The chain runs to 230 residues: Flagellar L-ring protein (230 aa).

Residues 1-22 form the signal peptide; it reads MSPISNFARIALACTVAALLGG. The N-palmitoyl cysteine moiety is linked to residue C23. C23 is lipidated: S-diacylglycerol cysteine.

The protein belongs to the FlgH family. The basal body constitutes a major portion of the flagellar organelle and consists of four rings (L,P,S, and M) mounted on a central rod.

Its subcellular location is the cell outer membrane. It localises to the bacterial flagellum basal body. Functionally, assembles around the rod to form the L-ring and probably protects the motor/basal body from shearing forces during rotation. This chain is Flagellar L-ring protein, found in Stenotrophomonas maltophilia (strain K279a).